Reading from the N-terminus, the 250-residue chain is ADPR responsive transcriptional repressor NtrR (250 aa).

Residues 26–157 enclose the Nudix hydrolase domain; sequence LMTVDMAIFS…DHHDLLQQAF (132 aa). The Nudix box signature appears at 62–85; the sequence is GFVDLEQDQNLMACAHRKLLEKTG. Residues 164 to 237 form a winged helix-like DNA-binding region region; the sequence is TRYTALPISL…RFALQDYDFN (74 aa).

With respect to regulation, DNA binding is efficiently suppressed in the presence of ADP-ribose (ADPR) or phospho-ADPR. Accumulation of ADPR resulting from NAD degradation may be interpreted by the cell as a signal to activate recycling of nicotinamide. Involved in the transcriptional regulation of the nondeamidating salvage pathway for production of NAD from nicotinamide. Represses expression of the prs-nadV-nrtR operon by binding to the DNA region located upstream of the operon, thus blocking the nondeamidating pathway. The protein is ADPR responsive transcriptional repressor NtrR of Acinetobacter baylyi (strain ATCC 33305 / BD413 / ADP1).